The sequence spans 1956 residues: Histone-lysine N-methyltransferase SETD1B (1956 aa).

Basic and acidic residues predominate over residues 1-20 (MSFKEAKPGERGKNPEDHGR). The disordered stretch occupies residues 1–46 (MSFKEAKPGERGKNPEDHGRKQTASWINGMEAGNQPSTSGEKKSHH). In terms of domain architecture, RRM spans 111–199 (DEFYVGPVPP…NIIHVELDTK (89 aa)). Disordered stretches follow at residues 226 to 478 (LDAS…LEAE), 502 to 637 (IAGD…VTPS), 662 to 696 (GFPPLPPPPPPQPGFPMPPPLPPPPPPTHPSVTVP), 926 to 1148 (KEPP…DEMQ), 1341 to 1386 (EDLP…TLTS), 1420 to 1464 (PTFP…VPSP), 1512 to 1553 (HLTS…NYET), 1627 to 1655 (TKHKKSRNSRHNNRYDEFSTVPSPEFSPP), and 1766 to 1790 (IDTQGKSIPAQPQASTRAGSERRSE). 3 stretches are compositionally biased toward polar residues: residues 254–290 (VTPNSSTPFSHDTAYSSSRQGTPNSYSQFTPQSQGTP), 298–312 (PFSQDSSYSSRQTTP), and 346–361 (SSGSYRGTEHTFNVTR). Over residues 363–373 (QPEPVQVPRTP) the composition is skewed to pro residues. Polar residues-rich tracts occupy residues 375 to 407 (LSHSSGNYKSAFSPYQGNTVFPQTDESQYPQTS), 416 to 432 (GPQTSDSYSDAGCNSAS), and 451 to 464 (DSTTEQKASFSQTP). Positions 517-527 (SPISSSSSQLS) are enriched in low complexity. Composition is skewed to polar residues over residues 535 to 551 (GSRYQDVTPSSRPSSTG) and 575 to 593 (SLCQNSRSASPIDQINQSG). Basic and acidic residues predominate over residues 594 to 605 (RKTESLDKKELV). The segment covering 625-634 (EDMEISDDEV) has biased composition (acidic residues). Positions 986 to 1000 (SEGEEEVESEGDDGE) are enriched in acidic residues. The span at 1001 to 1011 (TSDKEDSSSEK) shows a compositional bias: basic and acidic residues. Residues 1068–1122 (DSSDESEESSEYESSSDSDEKEEEDDEEEELVFGDDQSEDQDLGQEYEVETDREE) show a composition bias toward acidic residues. The segment covering 1341-1352 (EDLPRTPGRDIV) has biased composition (basic and acidic residues). 2 stretches are compositionally biased toward polar residues: residues 1358-1367 (LGKSQSTETV) and 1450-1462 (EPTSASLTMNSVP). Positions 1541–1551 (SAHEFETEKNY) are enriched in basic and acidic residues. Basic residues predominate over residues 1628-1638 (KHKKSRNSRHN). Over residues 1769 to 1783 (QGKSIPAQPQASTRA) the composition is skewed to polar residues. The RxxxRR motif signature appears at 1788–1793 (RSEQRR). Residues 1817–1934 (KKLRFCKSHI…VNEEITYDYK (118 aa)) form the SET domain. S-adenosyl-L-methionine is bound at residue tyrosine 1933. Positions 1940–1956 (VKIPCLCGAENCRGTLN) constitute a Post-SET domain.

Belongs to the class V-like SAM-binding methyltransferase superfamily. In terms of assembly, component of the SET1B/COMPASS complex.

Its subcellular location is the nucleus speckle. It is found in the chromosome. The catalysed reaction is L-lysyl(4)-[histone H3] + 3 S-adenosyl-L-methionine = N(6),N(6),N(6)-trimethyl-L-lysyl(4)-[histone H3] + 3 S-adenosyl-L-homocysteine + 3 H(+). In terms of biological role, histone methyltransferase that specifically methylates 'Lys-4' of histone H3, when part of the SET1 histone methyltransferase (HMT) complex, but not if the neighboring 'Lys-9' residue is already methylated. H3 'Lys-4' methylation represents a specific tag for epigenetic transcriptional activation. This Xenopus tropicalis (Western clawed frog) protein is Histone-lysine N-methyltransferase SETD1B (setd1b).